Reading from the N-terminus, the 267-residue chain is 2-dehydro-3-deoxyphosphooctonate aldolase (267 aa).

It belongs to the KdsA family.

It localises to the cytoplasm. It carries out the reaction D-arabinose 5-phosphate + phosphoenolpyruvate + H2O = 3-deoxy-alpha-D-manno-2-octulosonate-8-phosphate + phosphate. The protein operates within carbohydrate biosynthesis; 3-deoxy-D-manno-octulosonate biosynthesis; 3-deoxy-D-manno-octulosonate from D-ribulose 5-phosphate: step 2/3. It functions in the pathway bacterial outer membrane biogenesis; lipopolysaccharide biosynthesis. The protein is 2-dehydro-3-deoxyphosphooctonate aldolase of Campylobacter jejuni subsp. doylei (strain ATCC BAA-1458 / RM4099 / 269.97).